The following is a 409-amino-acid chain: Phosphopentomutase (409 aa).

Residues Asp10, Asp302, His307, Asp343, His344, and His355 each coordinate Mn(2+).

Belongs to the phosphopentomutase family. Requires Mn(2+) as cofactor.

Its subcellular location is the cytoplasm. It catalyses the reaction 2-deoxy-alpha-D-ribose 1-phosphate = 2-deoxy-D-ribose 5-phosphate. The enzyme catalyses alpha-D-ribose 1-phosphate = D-ribose 5-phosphate. Its pathway is carbohydrate degradation; 2-deoxy-D-ribose 1-phosphate degradation; D-glyceraldehyde 3-phosphate and acetaldehyde from 2-deoxy-alpha-D-ribose 1-phosphate: step 1/2. Its function is as follows. Isomerase that catalyzes the conversion of deoxy-ribose 1-phosphate (dRib-1-P) and ribose 1-phosphate (Rib-1-P) to deoxy-ribose 5-phosphate (dRib-5-P) and ribose 5-phosphate (Rib-5-P), respectively. The chain is Phosphopentomutase from Chelativorans sp. (strain BNC1).